The following is a 320-amino-acid chain: Pyrroline-5-carboxylate reductase 2 (320 aa).

S2 carries the post-translational modification N-acetylserine. Residues 6-11 (IGAGQL) and S34 contribute to the NADP(+) site. A8, Q10, L11, S34, E36, N56, V70, K71, and A97 together coordinate NADPH. NADP(+) is bound by residues N56, 69 to 72 (AVKP), and 95 to 97 (CAA). L-proline is bound at residue E164. N230 contacts NADPH. Positions 237 and 238 each coordinate L-proline. Positions 295–305 (PTVSTLTPSSP) are enriched in low complexity. Residues 295–320 (PTVSTLTPSSPGKLLTRSLALGGKKD) are disordered. S304 is modified (phosphoserine).

This sequence belongs to the pyrroline-5-carboxylate reductase family. In terms of assembly, homodecamer; composed of 5 homodimers. Interacts with LTO1. In terms of tissue distribution, detected in erythrocytes (at protein level). Expressed in fetal brain.

Its subcellular location is the cytoplasm. It is found in the mitochondrion. It carries out the reaction L-proline + NADP(+) = (S)-1-pyrroline-5-carboxylate + NADPH + 2 H(+). The enzyme catalyses L-proline + NAD(+) = (S)-1-pyrroline-5-carboxylate + NADH + 2 H(+). It participates in amino-acid biosynthesis; L-proline biosynthesis; L-proline from L-glutamate 5-semialdehyde: step 1/1. Subject to competitive inhibition by NADP. Was reported not to be inhibited by proline. However other study demonstrated an inhibition by proline. Oxidoreductase that catalyzes the last step in proline biosynthesis, which corresponds to the reduction of pyrroline-5-carboxylate to L-proline using NAD(P)H. At physiologic concentrations, has higher specific activity in the presence of NADH. Involved in cellular response to oxidative stress. In some cell types, such as erythrocytes, its primary function may be the generation of NADP(+). The protein is Pyrroline-5-carboxylate reductase 2 of Homo sapiens (Human).